The following is a 563-amino-acid chain: Germacrene-A synthase (563 aa).

Residues Asp-316, Asp-320, Asp-460, Thr-464, and Glu-468 each coordinate Mg(2+). The DDXXD motif motif lies at 316–320 (DDTYD).

Belongs to the terpene synthase family. Tpsa subfamily. Requires Mg(2+) as cofactor. Mn(2+) serves as cofactor. As to expression, high expression in disk florets, moderate expression in ray florets and detected in leaves and stems, but not in roots.

The enzyme catalyses (2E,6E)-farnesyl diphosphate = (+)-(R)-germacrene A + diphosphate. It functions in the pathway secondary metabolite biosynthesis; terpenoid biosynthesis. Its function is as follows. Sesquiterpene synthase involved in germacrene A biosynthesis. May be involved in the biosynthesis of the sesquiterpene lactone matricine, one of the major active compounds of chamomile flowers. This chain is Germacrene-A synthase, found in Matricaria chamomilla var. recutita (German chamomile).